Here is a 586-residue protein sequence, read N- to C-terminus: Kelch-like protein 7 (586 aa).

The BTB domain maps to 44–111 (CDVILTVQER…AYTARISVNS (68 aa)). Positions 146–248 (CLGISVLAEC…SKNFLSKTVQ (103 aa)) constitute a BACK domain. Kelch repeat units lie at residues 294 to 336 (RIAL…FWDN), 337 to 382 (VVYI…AAEG), 383 to 430 (KIYT…EANG), 431 to 481 (LIYV…FVKD), 483 to 528 (IFAV…AVGS), and 530 to 575 (IYVL…CVVD).

As to quaternary structure, homodimer. Component of the BCR(KLHL7) E3 ubiquitin ligase complex, at least composed of CUL3 and KLHL7 and RBX1.

It is found in the nucleus. The protein resides in the cytoplasm. It functions in the pathway protein modification; protein ubiquitination. Its function is as follows. Substrate-specific adapter of a BCR (BTB-CUL3-RBX1) E3 ubiquitin ligase complex. The BCR(KLHL7) complex acts by mediating ubiquitination and subsequent degradation of substrate proteins. Probably mediates 'Lys-48'-linked ubiquitination. The chain is Kelch-like protein 7 (Klhl7) from Mus musculus (Mouse).